The primary structure comprises 442 residues: DNA topoisomerase 6 subunit A3 (442 aa).

The disordered stretch occupies residues 1 to 34 (MSEKKRRGGAGAGAASGSASKKPRVSTAASYAES). Residues 91–224 (QDSASVTSRI…LHVVASEKGV (134 aa)) form the Topo IIA-type catalytic domain. Catalysis depends on tyrosine 185, which acts as the O-(5'-phospho-DNA)-tyrosine intermediate. Glutamate 271 and aspartate 323 together coordinate Mg(2+).

The protein belongs to the TOP6A family. Homodimer. Heterotetramer of two TOP6A and two TOP6B subunits. Interacts with TOP6B. The cofactor is Mg(2+). Highly expressed in flowers before pollination. Expressed in roots and shoots.

The protein resides in the nucleus. The enzyme catalyses ATP-dependent breakage, passage and rejoining of double-stranded DNA.. Its function is as follows. Component of the DNA topoisomerase VI involved in chromatin organization and progression of endoreduplication cycles. Relaxes both positive and negative superturns and exhibits a strong decatenase activity. May be involved in cell proliferation and stress tolerance. The protein is DNA topoisomerase 6 subunit A3 of Oryza sativa subsp. indica (Rice).